We begin with the raw amino-acid sequence, 263 residues long: UPF0246 protein Strop_2927 (263 aa).

Belongs to the UPF0246 family.

The chain is UPF0246 protein Strop_2927 from Salinispora tropica (strain ATCC BAA-916 / DSM 44818 / JCM 13857 / NBRC 105044 / CNB-440).